A 265-amino-acid polypeptide reads, in one-letter code: Iron(3+)-hydroxamate import ATP-binding protein FhuC (265 aa).

The region spanning 12–248 (FALRNISFRV…ETLEMIYGIP (237 aa)) is the ABC transporter domain. ATP contacts are provided by residues 44–51 (GHNGSGKS) and 168–179 (CLLLDEPTSALD).

Belongs to the ABC transporter superfamily. Iron (Fe3+)-hydroxamate importer (TC 3.A.1.14.7) family. The complex is composed of two ATP-binding proteins (FhuC), a transmembrane protein (FhuB) and a solute-binding protein (FhuD). FhuC interacts with FhuB.

It is found in the cell inner membrane. It catalyses the reaction ATP + H2O + Fe(3+)-hydroxamate complex-[hydroxamate-binding protein]Side 1 = ADP + phosphate + Fe(3+)-hydroxamate complexSide 2 + [hydroxamate-binding protein]Side 1.. Its activity is regulated as follows. ATPase activity is inhibited by vanadate. In terms of biological role, part of the ABC transporter complex FhuCDB involved in iron(3+)-hydroxamate import. Responsible for energy coupling to the transport system. The sequence is that of Iron(3+)-hydroxamate import ATP-binding protein FhuC (fhuC) from Escherichia coli (strain K12).